The chain runs to 356 residues: sn-glycerol-3-phosphate import ATP-binding protein UgpC (356 aa).

In terms of domain architecture, ABC transporter spans 4–235 (LKLQAVTKSW…PASLFVASFI (232 aa)). 37 to 44 (GPSGCGKS) serves as a coordination point for ATP.

It belongs to the ABC transporter superfamily. sn-glycerol-3-phosphate importer (TC 3.A.1.1.3) family. The complex is composed of two ATP-binding proteins (UgpC), two transmembrane proteins (UgpA and UgpE) and a solute-binding protein (UgpB).

It is found in the cell inner membrane. The catalysed reaction is sn-glycerol 3-phosphate(out) + ATP + H2O = sn-glycerol 3-phosphate(in) + ADP + phosphate + H(+). In terms of biological role, part of the ABC transporter complex UgpBAEC involved in sn-glycerol-3-phosphate (G3P) import. Responsible for energy coupling to the transport system. The protein is sn-glycerol-3-phosphate import ATP-binding protein UgpC of Escherichia coli O6:H1 (strain CFT073 / ATCC 700928 / UPEC).